We begin with the raw amino-acid sequence, 180 residues long: Cell division protein ZapC (180 aa).

It belongs to the ZapC family. Interacts directly with FtsZ.

It localises to the cytoplasm. In terms of biological role, contributes to the efficiency of the cell division process by stabilizing the polymeric form of the cell division protein FtsZ. Acts by promoting interactions between FtsZ protofilaments and suppressing the GTPase activity of FtsZ. This is Cell division protein ZapC from Vibrio vulnificus (strain CMCP6).